The primary structure comprises 315 residues: Peroxidase 1 (315 aa).

Residues 1–21 (MASSSYTSLLVLVALVTAASA) form the signal peptide. A Pyrrolidone carboxylic acid modification is found at Q22. 4 disulfides stabilise this stretch: C32–C107, C65–C70, C113–C310, and C193–C219. H63 (proton acceptor) is an active-site residue. Residues D64, V67, G69, D71, and S73 each contribute to the Ca(2+) site. Residue P155 participates in substrate binding. An N-linked (GlcNAc...) asparagine glycan is attached at N158. Position 186 (H186) interacts with heme b. A Ca(2+)-binding site is contributed by T187. Residues D234, T237, and D242 each coordinate Ca(2+). The N-linked (GlcNAc...) asparagine glycan is linked to N265.

Belongs to the peroxidase family. Classical plant (class III) peroxidase subfamily. Ca(2+) serves as cofactor. The cofactor is heme b.

It localises to the secreted. The enzyme catalyses 2 a phenolic donor + H2O2 = 2 a phenolic radical donor + 2 H2O. In terms of biological role, removal of H(2)O(2), oxidation of toxic reductants, biosynthesis and degradation of lignin, suberization, auxin catabolism, response to environmental stresses such as wounding, pathogen attack and oxidative stress. These functions might be dependent on each isozyme/isoform in each plant tissue. Involved in defense response to powdery meldew fungus. This Hordeum vulgare (Barley) protein is Peroxidase 1.